A 362-amino-acid chain; its full sequence is Chorismate synthase (362 aa).

Arg47 provides a ligand contact to NADP(+). Residues 124–126 (RSS), Gly286, 301–305 (KPTAT), and Arg327 each bind FMN.

This sequence belongs to the chorismate synthase family. In terms of assembly, homotetramer. Requires FMNH2 as cofactor.

It catalyses the reaction 5-O-(1-carboxyvinyl)-3-phosphoshikimate = chorismate + phosphate. It functions in the pathway metabolic intermediate biosynthesis; chorismate biosynthesis; chorismate from D-erythrose 4-phosphate and phosphoenolpyruvate: step 7/7. In terms of biological role, catalyzes the anti-1,4-elimination of the C-3 phosphate and the C-6 proR hydrogen from 5-enolpyruvylshikimate-3-phosphate (EPSP) to yield chorismate, which is the branch point compound that serves as the starting substrate for the three terminal pathways of aromatic amino acid biosynthesis. This reaction introduces a second double bond into the aromatic ring system. This is Chorismate synthase from Nostoc punctiforme (strain ATCC 29133 / PCC 73102).